The following is a 389-amino-acid chain: Oxytocin receptor (389 aa).

Residues 1–27 form a disordered region; the sequence is MEGELAANWSTEAVNSSAAPPGAEGNC. Residues 1 to 38 lie on the Extracellular side of the membrane; the sequence is MEGELAANWSTEAVNSSAAPPGAEGNCTAGPPRRNEAL. Asparagine 8, asparagine 15, and asparagine 26 each carry an N-linked (GlcNAc...) asparagine glycan. Residues 8–18 are compositionally biased toward polar residues; sequence NWSTEAVNSSA. Residues 39–63 traverse the membrane as a helical segment; it reads ARVEVAVLCLILFLALSGNACVLLA. The Cytoplasmic segment spans residues 64–74; the sequence is LRTTRHKHSRL. Residues 75-97 traverse the membrane as a helical segment; sequence FFFMKHLSIADLVVAVFQVLPQL. Topologically, residues 98 to 113 are extracellular; sequence LWDITFRFYGPDLLCR. An intrachain disulfide couples cysteine 112 to cysteine 187. Residues 114-135 traverse the membrane as a helical segment; sequence LVKYLQVVGMFASTYLLLLMSL. The Cytoplasmic segment spans residues 136 to 154; sequence DRCLAICQPLRSLRRRTDR. The helical transmembrane segment at 155–175 threads the bilayer; the sequence is LAVLATWLGCLVASAPQVHIF. The Extracellular segment spans residues 176–202; it reads SLREVADGVFDCWAVFIQPWGPKAYIT. The helical transmembrane segment at 203–225 threads the bilayer; sequence WITLAVYIVPVIVLAACYGLISF. The Cytoplasmic segment spans residues 226–275; that stretch reads KIWQNLRLKTAAAAAAEAPEGAAAGDGGRMALARVSSVKLISKAKIRTVK. A helical transmembrane segment spans residues 276–294; sequence MTFIIVLAFIVCWTPFFFV. The Extracellular segment spans residues 295–309; that stretch reads QMWSVWDANAPKEAS. The helical transmembrane segment at 310-332 threads the bilayer; that stretch reads AFIIVMLLASLNSCCNPWIYMLF. The Cytoplasmic segment spans residues 333–389; the sequence is TGHLFHELVQRFLCCSASYLKGNRLGETSTSKKSNSSSFVLSHRSSSQRSCSQPSTA. A disordered region spans residues 358–389; sequence GETSTSKKSNSSSFVLSHRSSSQRSCSQPSTA. The segment covering 360 to 389 has biased composition (low complexity); sequence TSTSKKSNSSSFVLSHRSSSQRSCSQPSTA. Residues serine 366 and serine 368 each carry the phosphoserine modification.

The protein belongs to the G-protein coupled receptor 1 family. Vasopressin/oxytocin receptor subfamily.

It localises to the cell membrane. In terms of biological role, receptor for oxytocin. The activity of this receptor is mediated by G proteins which activate a phosphatidylinositol-calcium second messenger system. This chain is Oxytocin receptor (OXTR), found in Macaca mulatta (Rhesus macaque).